The primary structure comprises 102 residues: Small ribosomal subunit protein uS10 (102 aa).

The protein belongs to the universal ribosomal protein uS10 family. In terms of assembly, part of the 30S ribosomal subunit.

Its function is as follows. Involved in the binding of tRNA to the ribosomes. In Thermosipho africanus (strain TCF52B), this protein is Small ribosomal subunit protein uS10.